Here is a 195-residue protein sequence, read N- to C-terminus: MRTAEITRNTNETRIRVAVNLDGTGKQTLDTGVPFLDHMLDQIARHGLIDLDIKAEGDLHIDAHHTVEDVGITLGMAIAKAVGDKAGLRRYGHAYVPLDEALSRVVIDFSGRPGLEYHIPFTRARIGDFDVDLTREFFQGLVNHALVTLHIDNLRGVNAHHQCETVFKAFGRALRMALELDPRMGGAVPSTKGVL.

This sequence belongs to the imidazoleglycerol-phosphate dehydratase family.

The protein localises to the cytoplasm. The enzyme catalyses D-erythro-1-(imidazol-4-yl)glycerol 3-phosphate = 3-(imidazol-4-yl)-2-oxopropyl phosphate + H2O. It functions in the pathway amino-acid biosynthesis; L-histidine biosynthesis; L-histidine from 5-phospho-alpha-D-ribose 1-diphosphate: step 6/9. This chain is Imidazoleglycerol-phosphate dehydratase, found in Bordetella petrii (strain ATCC BAA-461 / DSM 12804 / CCUG 43448).